A 607-amino-acid chain; its full sequence is Proteasome-associated ATPase (607 aa).

Basic and acidic residues predominate over residues Met-1–Ser-17. Positions Met-1–Leu-65 are disordered. Residues Ala-59–Gln-102 adopt a coiled-coil conformation. Position 294-299 (Gly-294–Leu-299) interacts with ATP. The docks into pockets in the proteasome alpha-ring stretch occupies residues Tyr-606–Leu-607.

The protein belongs to the AAA ATPase family. As to quaternary structure, homohexamer. Assembles into a hexameric ring structure that caps the 20S proteasome core. Strongly interacts with the prokaryotic ubiquitin-like protein Pup through a hydrophobic interface; the interacting region of ARC lies in its N-terminal coiled-coil domain. There is one Pup binding site per ARC hexamer ring. Upon ATP-binding, the C-terminus of ARC interacts with the alpha-rings of the proteasome core, possibly by binding to the intersubunit pockets.

It functions in the pathway protein degradation; proteasomal Pup-dependent pathway. Functionally, ATPase which is responsible for recognizing, binding, unfolding and translocation of pupylated proteins into the bacterial 20S proteasome core particle. May be essential for opening the gate of the 20S proteasome via an interaction with its C-terminus, thereby allowing substrate entry and access to the site of proteolysis. Thus, the C-termini of the proteasomal ATPase may function like a 'key in a lock' to induce gate opening and therefore regulate proteolysis. The chain is Proteasome-associated ATPase from Gordonia bronchialis (strain ATCC 25592 / DSM 43247 / BCRC 13721 / JCM 3198 / KCTC 3076 / NBRC 16047 / NCTC 10667) (Rhodococcus bronchialis).